Reading from the N-terminus, the 569-residue chain is 2-succinyl-5-enolpyruvyl-6-hydroxy-3-cyclohexene-1-carboxylate synthase (569 aa).

The protein belongs to the TPP enzyme family. MenD subfamily. In terms of assembly, homodimer. Requires Mg(2+) as cofactor. Mn(2+) is required as a cofactor. The cofactor is thiamine diphosphate.

It carries out the reaction isochorismate + 2-oxoglutarate + H(+) = 5-enolpyruvoyl-6-hydroxy-2-succinyl-cyclohex-3-ene-1-carboxylate + CO2. The protein operates within quinol/quinone metabolism; 1,4-dihydroxy-2-naphthoate biosynthesis; 1,4-dihydroxy-2-naphthoate from chorismate: step 2/7. It participates in quinol/quinone metabolism; menaquinone biosynthesis. Its function is as follows. Catalyzes the thiamine diphosphate-dependent decarboxylation of 2-oxoglutarate and the subsequent addition of the resulting succinic semialdehyde-thiamine pyrophosphate anion to isochorismate to yield 2-succinyl-5-enolpyruvyl-6-hydroxy-3-cyclohexene-1-carboxylate (SEPHCHC). The protein is 2-succinyl-5-enolpyruvyl-6-hydroxy-3-cyclohexene-1-carboxylate synthase of Paenarthrobacter aurescens (strain TC1).